Reading from the N-terminus, the 107-residue chain is Protamine-2 (107 aa).

Residues 1–94 are disordered; it reads MVRYRMRSPS…RRGCRRSRRR (94 aa). Phosphoserine is present on residues S8, S10, and S33. The segment covering 43-94 has biased composition (basic residues); it reads THRGHHHHRHRRCSRKRLHRIHKRRRSCRRRRRHSCRHRRRHRRGCRRSRRR.

Belongs to the protamine P2 family. Interacts with TDRP. Proteolytic processing into mature chains is required for histone eviction during spermatogenesis. Transition proteins (TNP1 and TNP2) are required for processing. Expressed in spermatids (at protein level).

The protein resides in the nucleus. The protein localises to the chromosome. In terms of biological role, protamines substitute for histones in the chromatin of sperm during the haploid phase of spermatogenesis. They compact sperm DNA into a highly condensed, stable and inactive complex. The polypeptide is Protamine-2 (Prm2) (Mus musculus (Mouse)).